A 423-amino-acid polypeptide reads, in one-letter code: Gamma-glutamyl phosphate reductase (423 aa).

It belongs to the gamma-glutamyl phosphate reductase family.

It localises to the cytoplasm. It carries out the reaction L-glutamate 5-semialdehyde + phosphate + NADP(+) = L-glutamyl 5-phosphate + NADPH + H(+). The protein operates within amino-acid biosynthesis; L-proline biosynthesis; L-glutamate 5-semialdehyde from L-glutamate: step 2/2. In terms of biological role, catalyzes the NADPH-dependent reduction of L-glutamate 5-phosphate into L-glutamate 5-semialdehyde and phosphate. The product spontaneously undergoes cyclization to form 1-pyrroline-5-carboxylate. In Paraburkholderia phymatum (strain DSM 17167 / CIP 108236 / LMG 21445 / STM815) (Burkholderia phymatum), this protein is Gamma-glutamyl phosphate reductase.